The chain runs to 336 residues: Glucokinase (336 aa).

12–17 (ADIGGT) is an ATP binding site.

Belongs to the bacterial glucokinase family.

It localises to the cytoplasm. The enzyme catalyses D-glucose + ATP = D-glucose 6-phosphate + ADP + H(+). The protein is Glucokinase of Helicobacter acinonychis (strain Sheeba).